A 281-amino-acid polypeptide reads, in one-letter code: Shikimate dehydrogenase (NADP(+)) (281 aa).

Residues serine 20–serine 22 and threonine 67 contribute to the shikimate site. Residue lysine 71 is the Proton acceptor of the active site. Aspartate 83 contributes to the NADP(+) binding site. Shikimate is bound by residues asparagine 92 and aspartate 108. NADP(+) is bound by residues glycine 133–alanine 137, asparagine 157–arginine 162, and methionine 225. Tyrosine 227 contributes to the shikimate binding site. Glycine 248 is a binding site for NADP(+).

It belongs to the shikimate dehydrogenase family. As to quaternary structure, homodimer.

It catalyses the reaction shikimate + NADP(+) = 3-dehydroshikimate + NADPH + H(+). It functions in the pathway metabolic intermediate biosynthesis; chorismate biosynthesis; chorismate from D-erythrose 4-phosphate and phosphoenolpyruvate: step 4/7. In terms of biological role, involved in the biosynthesis of the chorismate, which leads to the biosynthesis of aromatic amino acids. Catalyzes the reversible NADPH linked reduction of 3-dehydroshikimate (DHSA) to yield shikimate (SA). The sequence is that of Shikimate dehydrogenase (NADP(+)) from Paracidovorax citrulli (strain AAC00-1) (Acidovorax citrulli).